The chain runs to 139 residues: Putative pre-16S rRNA nuclease (139 aa).

It belongs to the YqgF nuclease family.

It localises to the cytoplasm. Its function is as follows. Could be a nuclease involved in processing of the 5'-end of pre-16S rRNA. This is Putative pre-16S rRNA nuclease from Pectobacterium atrosepticum (strain SCRI 1043 / ATCC BAA-672) (Erwinia carotovora subsp. atroseptica).